The sequence spans 477 residues: Cysteine--tRNA ligase (477 aa).

Cys28 provides a ligand contact to Zn(2+). Residues 30–40 carry the 'HIGH' region motif; it reads PTVYDYAHIGN. Zn(2+)-binding residues include Cys213, His238, and Glu242. The short motif at 270-274 is the 'KMSKS' region element; the sequence is KMSKS. Position 273 (Lys273) interacts with ATP.

The protein belongs to the class-I aminoacyl-tRNA synthetase family. In terms of assembly, monomer. Zn(2+) serves as cofactor.

It is found in the cytoplasm. The catalysed reaction is tRNA(Cys) + L-cysteine + ATP = L-cysteinyl-tRNA(Cys) + AMP + diphosphate. The protein is Cysteine--tRNA ligase (cysS) of Chlamydia trachomatis serovar D (strain ATCC VR-885 / DSM 19411 / UW-3/Cx).